We begin with the raw amino-acid sequence, 827 residues long: MTLSRRAFIKQTAAATAASAAGVVLPGVDALAASDSLTWSKAPCRFCGTGCGVSVGVKNGKVVATQGDPQAEVNRGLNCVKGYFLSKIMYGQDRLTTPLLRMKDGKYAKDGEFAPVSWDQAFDVMADHFKRTLKEKGPTAVGMFGSGQWTVWEGYAAVKLMKAGFRSNNLDPNARHCMASAVTGFMRTFGMDEPMGCYDDIEQADTFVLWGSNMSEMHPILWTRITDRRLSTPTTRVVVLSTFEHRSFDLADQTIIFTPQSDLAILNYIANYIIRNGNVNRDFVNRHTVFKQGNADIGYGLRPDNPLQKTARNAGDPNGSQPITFDEFAKFVSKYDAAYVTKLSGVPQNKLDQLARLYADPKVKVMSFWTMGFNQHTRGTWANNMVYNLHLLTGKIATPGNSPFSLTGQPSACGTAREVGTFSHRLPADMVVTNPKHREEAEHIWKLPAGTIPDKPGYHAVLQNRMLRDGKLNAYWVQVNNNVQAAANINGEALPGYRNPQAFVVVSDVYPTVTAVAADLILPSAMWVEKEGAYGNAERRTQFWHQLVDAPAGARSDLWQLVEFSKRFKVEEVWPADLLAKKPEYRGKTLYDVLYRNGQVDRFALTETDSHYRNDEAKAFGFYIQKGLFEEYASFGRGHGHDLAPFDAYHKARGLRWPVVNGKETRWRYKEGSDPYVKTGTGWQFYGNPDGRAVIYALPYEPPPEVPDKEYPFWLATGRVLEHWHSGSMTRRVPELYRAFPNAVCFMHPDDAKAMGVRRGVEVKVMSRRGYILTRVETRGRDKPPRGLVFVPWFDSSQLINKVTLDATDPISLQTDYKKCAVKIVKV.

Positions 1 to 32 (MTLSRRAFIKQTAAATAASAAGVVLPGVDALA) form a signal peptide, tat-type signal. Residues 37–93 (LTWSKAPCRFCGTGCGVSVGVKNGKVVATQGDPQAEVNRGLNCVKGYFLSKIMYGQD) form the 4Fe-4S Mo/W bis-MGD-type domain. [4Fe-4S] cluster contacts are provided by cysteine 44, cysteine 47, cysteine 51, and cysteine 79. Residues lysine 81, glutamine 148, asparagine 173, cysteine 177, 241-245 (STFEH), 260-262 (QSD), methionine 371, glutamine 375, asparagine 481, 507-508 (SD), lysine 530, aspartate 557, and 717-726 (TGRVLEHWHS) each bind Mo-bis(molybdopterin guanine dinucleotide). A substrate-binding site is contributed by tryptophan 793. Residues asparagine 801 and lysine 818 each coordinate Mo-bis(molybdopterin guanine dinucleotide).

The protein belongs to the prokaryotic molybdopterin-containing oxidoreductase family. NasA/NapA/NarB subfamily. As to quaternary structure, component of the periplasmic nitrate reductase NapAB complex composed of NapA and NapB. [4Fe-4S] cluster serves as cofactor. It depends on Mo-bis(molybdopterin guanine dinucleotide) as a cofactor. In terms of processing, predicted to be exported by the Tat system. The position of the signal peptide cleavage has not been experimentally proven.

It is found in the periplasm. It catalyses the reaction 2 Fe(II)-[cytochrome] + nitrate + 2 H(+) = 2 Fe(III)-[cytochrome] + nitrite + H2O. Functionally, catalytic subunit of the periplasmic nitrate reductase complex NapAB. Receives electrons from NapB and catalyzes the reduction of nitrate to nitrite. The polypeptide is Periplasmic nitrate reductase (Paraburkholderia xenovorans (strain LB400)).